Consider the following 316-residue polypeptide: Pantothenate kinase (316 aa).

95-102 (GSVAVGKS) serves as a coordination point for ATP.

Belongs to the prokaryotic pantothenate kinase family.

The protein resides in the cytoplasm. The enzyme catalyses (R)-pantothenate + ATP = (R)-4'-phosphopantothenate + ADP + H(+). It participates in cofactor biosynthesis; coenzyme A biosynthesis; CoA from (R)-pantothenate: step 1/5. This is Pantothenate kinase from Sodalis glossinidius (strain morsitans).